Reading from the N-terminus, the 195-residue chain is PRS fimbrial minor pilin protein (195 aa).

The first 22 residues, 1 to 22 (MRLRFSVPLFFFGCVFVHGVFA), serve as a signal peptide directing secretion. C58 and C97 are oxidised to a cystine.

Belongs to the fimbrial protein family.

Its subcellular location is the secreted. It is found in the fimbrium. In terms of biological role, fimbriae (also called pili), polar filaments radiating from the surface of the bacterium to a length of 0.5-1.5 micrometers and numbering 100-300 per cell, enable bacteria to colonize the epithelium of specific host organs. Its function is as follows. Seems to anchor the pilus to the bacterial cell. In addition the stoichiometric relationship between PrsH and PrsA determines the pilus length. The polypeptide is PRS fimbrial minor pilin protein (prsH) (Escherichia coli).